The sequence spans 190 residues: Peptidyl-tRNA hydrolase (190 aa).

TRNA is bound at residue Y14. The Proton acceptor role is filled by H19. TRNA is bound by residues Y64, N66, and N112.

It belongs to the PTH family. In terms of assembly, monomer.

It is found in the cytoplasm. It carries out the reaction an N-acyl-L-alpha-aminoacyl-tRNA + H2O = an N-acyl-L-amino acid + a tRNA + H(+). Its function is as follows. Hydrolyzes ribosome-free peptidyl-tRNAs (with 1 or more amino acids incorporated), which drop off the ribosome during protein synthesis, or as a result of ribosome stalling. Catalyzes the release of premature peptidyl moieties from peptidyl-tRNA molecules trapped in stalled 50S ribosomal subunits, and thus maintains levels of free tRNAs and 50S ribosomes. This chain is Peptidyl-tRNA hydrolase, found in Chlorobaculum parvum (strain DSM 263 / NCIMB 8327) (Chlorobium vibrioforme subsp. thiosulfatophilum).